Reading from the N-terminus, the 485-residue chain is Probable cytosol aminopeptidase (485 aa).

Lysine 251 and aspartate 256 together coordinate Mn(2+). Residue lysine 263 is part of the active site. Residues aspartate 274, aspartate 333, and glutamate 335 each coordinate Mn(2+). Arginine 337 is an active-site residue.

This sequence belongs to the peptidase M17 family. Mn(2+) is required as a cofactor.

It is found in the cytoplasm. The enzyme catalyses Release of an N-terminal amino acid, Xaa-|-Yaa-, in which Xaa is preferably Leu, but may be other amino acids including Pro although not Arg or Lys, and Yaa may be Pro. Amino acid amides and methyl esters are also readily hydrolyzed, but rates on arylamides are exceedingly low.. It carries out the reaction Release of an N-terminal amino acid, preferentially leucine, but not glutamic or aspartic acids.. Presumably involved in the processing and regular turnover of intracellular proteins. Catalyzes the removal of unsubstituted N-terminal amino acids from various peptides. The chain is Probable cytosol aminopeptidase from Brucella melitensis biotype 1 (strain ATCC 23456 / CCUG 17765 / NCTC 10094 / 16M).